The primary structure comprises 163 residues: Nucleotide-binding protein HD_0358 (163 aa).

This sequence belongs to the YajQ family.

Its function is as follows. Nucleotide-binding protein. In Haemophilus ducreyi (strain 35000HP / ATCC 700724), this protein is Nucleotide-binding protein HD_0358.